Here is a 254-residue protein sequence, read N- to C-terminus: Stem 31 kDa glycoprotein (254 aa).

The signal sequence occupies residues 1–20 (MKLFVFFVAAVVLVAWPCHG). A propeptide spanning residues 21 to 35 (AGYQRFPLRMKTGYG) is cleaved from the precursor. An N-linked (GlcNAc...) asparagine glycan is attached at Asn130.

This sequence belongs to the APS1/VSP family. As to expression, accumulates in the stems of developing soybean seedlings.

Functionally, may function as somatic storage protein during early seedling development. The sequence is that of Stem 31 kDa glycoprotein (VSPB) from Glycine max (Soybean).